The primary structure comprises 248 residues: Mannose-binding protein C (248 aa).

The signal sequence occupies residues 1–20 (MSLFPSLTLLLLSVVATSYS). One can recognise a Collagen-like domain in the interval 42 to 99 (GINGFPGKDGRDGTKGEKGEPGQGLRGLQGPPGKLGPPGNPGSSGSPGPKGQKGDPGE). The interval 43-113 (INGFPGKDGR…DSSLAASERK (71 aa)) is disordered. Position 47 is a 4-hydroxyproline (P47). Positions 49-61 (KDGRDGTKGEKGE) are enriched in basic and acidic residues. 4-hydroxyproline occurs at positions 73, 79, 82, and 88. The span at 82-91 (PGSSGSPGPK) shows a compositional bias: low complexity. Residues 112–130 (RKALQTEMARIKKWLTFSL) are a coiled coil. The region spanning 134-245 (VGNKFFLTNG…CSSSHLALCE (112 aa)) is the C-type lectin domain. Disulfide bonds link C155–C244 and C222–C236.

Oligomeric complex of 3 or more homotrimers. Interacts with MASP1 and MASP2. Interacts with MEP1A and MEP1B and may inhibit their catalytic activity. In terms of processing, hydroxylation on proline residues within the sequence motif, GXPG, is most likely to be 4-hydroxy as this fits the requirement for 4-hydroxylation in vertebrates.

Its subcellular location is the secreted. In terms of biological role, calcium-dependent lectin involved in innate immune defense. Binds mannose, fucose and N-acetylglucosamine on different microorganisms and activates the lectin complement pathway. Binds to late apoptotic cells, as well as to apoptotic blebs and to necrotic cells, but not to early apoptotic cells, facilitating their uptake by macrophages. The protein is Mannose-binding protein C (MBL2) of Chlorocebus aethiops (Green monkey).